A 457-amino-acid chain; its full sequence is Siroheme synthase (457 aa).

Positions Leu-4 to Ala-202 are precorrin-2 dehydrogenase /sirohydrochlorin ferrochelatase. NAD(+) contacts are provided by residues Asp-22–Val-23 and Leu-43–Thr-44. Ser-128 carries the phosphoserine modification. Residues Gly-216–Arg-448 form a uroporphyrinogen-III C-methyltransferase region. Pro-225 lines the S-adenosyl-L-methionine pocket. Asp-248 functions as the Proton acceptor in the catalytic mechanism. Lys-270 functions as the Proton donor in the catalytic mechanism. Residues Gly-301–Asp-303, Ile-306, Thr-331–Ala-332, Met-382, Gly-411, and Ala-437 each bind S-adenosyl-L-methionine.

This sequence in the N-terminal section; belongs to the precorrin-2 dehydrogenase / sirohydrochlorin ferrochelatase family. The protein in the C-terminal section; belongs to the precorrin methyltransferase family. As to quaternary structure, homodimer.

It carries out the reaction uroporphyrinogen III + 2 S-adenosyl-L-methionine = precorrin-2 + 2 S-adenosyl-L-homocysteine + H(+). It catalyses the reaction precorrin-2 + NAD(+) = sirohydrochlorin + NADH + 2 H(+). The enzyme catalyses siroheme + 2 H(+) = sirohydrochlorin + Fe(2+). Its pathway is cofactor biosynthesis; adenosylcobalamin biosynthesis; precorrin-2 from uroporphyrinogen III: step 1/1. It functions in the pathway cofactor biosynthesis; adenosylcobalamin biosynthesis; sirohydrochlorin from precorrin-2: step 1/1. The protein operates within porphyrin-containing compound metabolism; siroheme biosynthesis; precorrin-2 from uroporphyrinogen III: step 1/1. It participates in porphyrin-containing compound metabolism; siroheme biosynthesis; siroheme from sirohydrochlorin: step 1/1. Its pathway is porphyrin-containing compound metabolism; siroheme biosynthesis; sirohydrochlorin from precorrin-2: step 1/1. In terms of biological role, multifunctional enzyme that catalyzes the SAM-dependent methylations of uroporphyrinogen III at position C-2 and C-7 to form precorrin-2 via precorrin-1. Then it catalyzes the NAD-dependent ring dehydrogenation of precorrin-2 to yield sirohydrochlorin. Finally, it catalyzes the ferrochelation of sirohydrochlorin to yield siroheme. The protein is Siroheme synthase of Salmonella typhimurium (strain LT2 / SGSC1412 / ATCC 700720).